A 411-amino-acid chain; its full sequence is Ornithine aminotransferase (411 aa).

K257 carries the N6-(pyridoxal phosphate)lysine modification.

The protein belongs to the class-III pyridoxal-phosphate-dependent aminotransferase family. OAT subfamily. Pyridoxal 5'-phosphate is required as a cofactor.

The protein localises to the cytoplasm. The enzyme catalyses a 2-oxocarboxylate + L-ornithine = L-glutamate 5-semialdehyde + an L-alpha-amino acid. Its pathway is amino-acid biosynthesis; L-proline biosynthesis; L-glutamate 5-semialdehyde from L-ornithine: step 1/1. In terms of biological role, catalyzes the interconversion of ornithine to glutamate semialdehyde. The sequence is that of Ornithine aminotransferase from Bordetella bronchiseptica (strain ATCC BAA-588 / NCTC 13252 / RB50) (Alcaligenes bronchisepticus).